Consider the following 416-residue polypeptide: Nuclear hormone receptor family member nhr-59 (416 aa).

A DNA-binding region (nuclear receptor) is located at residues 17-94; the sequence is QTFCQVCGQE…IGMDIQNFQF (78 aa). 2 consecutive NR C4-type zinc fingers follow at residues 20-40 and 57-82; these read CQVC…CRAC and CKDG…LKKC. In terms of domain architecture, NR LBD spans 162 to 415; sequence TRLQKLSSSL…FSHPELVKDV (254 aa).

It belongs to the nuclear hormone receptor family.

The protein localises to the nucleus. Functionally, orphan nuclear receptor. This Caenorhabditis elegans protein is Nuclear hormone receptor family member nhr-59.